Reading from the N-terminus, the 332-residue chain is Ferredoxin--NADP reductase (332 aa).

Residues Asp33, Gln41, Tyr46, Ala86, Ile121, Asp282, and Ser325 each coordinate FAD.

It belongs to the ferredoxin--NADP reductase type 2 family. Homodimer. FAD serves as cofactor.

The enzyme catalyses 2 reduced [2Fe-2S]-[ferredoxin] + NADP(+) + H(+) = 2 oxidized [2Fe-2S]-[ferredoxin] + NADPH. The polypeptide is Ferredoxin--NADP reductase (Metallosphaera sedula (strain ATCC 51363 / DSM 5348 / JCM 9185 / NBRC 15509 / TH2)).